Consider the following 109-residue polypeptide: MILVALALVALAVAAPPAEEPVQILRSEFNQQPEGSYQFGFETADGISRSETGDVKEALDEENKPHKVVVVRGSYSYTDKEGNPETVNYFADETGYHAEGSSIPKPARK.

The first 14 residues, 1–14, serve as a signal peptide directing secretion; that stretch reads MILVALALVALAVA. Positions 34-107 constitute a Chitin-binding type R&amp;R domain; the sequence is EGSYQFGFET…AEGSSIPKPA (74 aa).

Its function is as follows. Component of the cuticle of the larva of Helicoverpa armigera. This is Larval cuticle protein 1 (LCP1) from Helicoverpa armigera (Cotton bollworm).